A 90-amino-acid polypeptide reads, in one-letter code: Acylphosphatase (90 aa).

The 86-residue stretch at 5–90 folds into the Acylphosphatase-like domain; it reads GCKVIVSGIV…YQKTNDFIAC (86 aa). Catalysis depends on residues Arg20 and Asn38.

It belongs to the acylphosphatase family.

It carries out the reaction an acyl phosphate + H2O = a carboxylate + phosphate + H(+). In Psychromonas ingrahamii (strain DSM 17664 / CCUG 51855 / 37), this protein is Acylphosphatase (acyP).